Reading from the N-terminus, the 1442-residue chain is Protein patched homolog 1 (1442 aa).

The tract at residues 1-45 (MASAADALEPESGSSTAGGGSHPVRAARSARGRRRRSGGTRRAAA) is disordered. Residues 1 to 101 (MASAADALEP…GCYIQKNCGK (101 aa)) lie on the Cytoplasmic side of the membrane. A compositionally biased stretch (basic residues) spans 28–39 (RSARGRRRRSGG). A helical membrane pass occupies residues 102–122 (FLVVGLLYSAFAVGLRAANLE). Residues 123-436 (TNVEELWVEV…LDDILKSFSD (314 aa)) are Extracellular-facing. N-linked (GlcNAc...) asparagine glycosylation is found at Asn141, Asn312, Asn349, and Asn414. A helical transmembrane segment spans residues 437 to 457 (VSVIRVASGYLLMLAYACLTM). Residues 438–598 (SVIRVASGYL…LLIFPAILSM (161 aa)) form the SSD domain. The Cytoplasmic portion of the chain corresponds to 458 to 472 (LRWDCAKSQGAVGLA). A helical transmembrane segment spans residues 473 to 493 (GVLLVALSVAAGLGLCSLIGI). Residues 494–501 (SFNAATTQ) are Extracellular-facing. Residues 502–522 (VLPFLALGVGVDDVFLLAHAF) traverse the membrane as a helical segment. Residues 523–547 (SETGQNKRIPFEDRTGECLKRTGAS) are Cytoplasmic-facing. The helical transmembrane segment at 548-568 (VALTSISNVTAFFMAALIPIP) threads the bilayer. The Extracellular segment spans residues 569–577 (ALRAFSLQA). A helical transmembrane segment spans residues 578–598 (AVVVVFNFAMVLLIFPAILSM). The Cytoplasmic segment spans residues 599-747 (DLYRREDRRL…HYAPFLLKPK (149 aa)). Residues 748-768 (AKVVVIFLFLGLLGLSLYGTT) traverse the membrane as a helical segment. Over 769–1026 (RVRDGLDLTD…WEQYIGLRHW (258 aa)) the chain is Extracellular. N-linked (GlcNAc...) asparagine glycosylation is found at Asn827, Asn874, and Asn999. The chain crosses the membrane as a helical span at residues 1027–1047 (LLLSISVVLACTFLVCALFLL). At 1048–1053 (NPWTAG) the chain is on the cytoplasmic side. The helical transmembrane segment at 1054-1074 (IIVVVLALMTVELFGMMGLIG) threads the bilayer. Residues 1075-1082 (IKLSAVPV) lie on the Extracellular side of the membrane. The chain crosses the membrane as a helical span at residues 1083 to 1101 (VILIASVGIGVEFTVHIAL). The Cytoplasmic segment spans residues 1102 to 1120 (AFLTAIGDKNRRAVLALEH). Residues 1121 to 1141 (MFAPVLDGAVSTLLGVLMLAG) form a helical membrane-spanning segment. At 1142-1153 (SEFDFIVRYFFA) the chain is on the extracellular side. The helical transmembrane segment at 1154–1174 (VLAILTILGVLNGLVLLPVLL) threads the bilayer. Over 1175 to 1442 (SFFGPYPEVS…EERTAGKISE (268 aa)) the chain is Cytoplasmic. Disordered regions lie at residues 1188–1231 (GRNR…TTVS) and 1266–1338 (STVV…LNHK). The span at 1217–1226 (SDSSDSEYSS) shows a compositional bias: low complexity. Residues 1276–1293 (QSSPRLQSNPEAGTQQVW) show a composition bias toward polar residues.

Belongs to the patched family. Post-translationally, glycosylation is necessary for SHH binding. Expression is seen in the embryonic neural tube, sclerotome, visceral mesoderm, and limb bud.

Its subcellular location is the membrane. Its function is as follows. Acts as a receptor for sonic hedgehog (SHH), indian hedgehog (IHH) and desert hedgehog (DHH). Associates with the smoothened protein (SMO) to transduce the hedgehog's proteins signal. This chain is Protein patched homolog 1 (PTCH1), found in Gallus gallus (Chicken).